A 154-amino-acid chain; its full sequence is MLRLLLLPLFLFTLSMCMGQTFQYSRGWTNGKRSFNAASPLLANGHLHRGSELGLTDLYDLQDWSSDRRLERCLSQLQRSLIARNCVPGSDFNANRVDPDPENSVHPRLSNINGENVLYSSANIPNRHRQSNELLEELSAAGGASAEPNVFGKH.

The signal sequence occupies residues M1–G19. Position 20 is a pyrrolidone carboxylic acid (Q20). The residue at position 30 (N30) is an Asparagine amide. Residues L70–H154 constitute a propeptide that is removed on maturation.

This sequence belongs to the corazonin family. As to expression, expression is restricted to 24 neurons in the larval CNS (8 in the brain and 16 in the ventral nerve cord) and 12-16 neurons in the pars lateralis of the adult brain.

The protein localises to the secreted. Its function is as follows. Cardioactive peptide. Corazonin is probably involved in the physiological regulation of the heart beat. Clock (Clk) and cycle (cyc) proteins negatively regulate Crz transcription in a cell-specific manner. The protein is Pro-corazonin (Crz) of Drosophila simulans (Fruit fly).